Consider the following 79-residue polypeptide: uncharacterized protein (79 aa).

The signal sequence occupies residues 1–33 (MRFIIRTVMLIALVWIGLLLSGYGVLIGSKENA).

This is an uncharacterized protein from Escherichia coli O157:H7.